Reading from the N-terminus, the 367-residue chain is MNSHECGAQACVCCPVLGEAIAAGNEGRGDTAHAPVRGTVVVQPQRDGYGRARPREPIEIDPWFGHDSSTASVVFPQRGRPWVTCDWPLDVTVRSPRATWDARFFCGYAFRPATADGTRSCLLGVPGDAGMSRVVCRPPPNEREIDVRVSPGECLEFSMAIIAPGSEMFWTAVPPRELLDYVCAKAMLLMDCLLSERVSRKAAIVPMLLLQEEAFLPSDRKRARWSDPDTPGRPLVTAEHAYASGARLECPFVIDLARRRNNFWAGMGLAFLPRTALSTRERILAKFCAHHIIIDVMTNLGREVVIPAALSMPGESVVMVVTSDEHGLRIDVRERRPTLNAQRAHAAAQQQPRRRNRRQQGTGASAS.

The tract at residues 333-367 (RERRPTLNAQRAHAAAQQQPRRRNRRQQGTGASAS) is disordered. A compositionally biased stretch (low complexity) spans 341-351 (AQRAHAAAQQQ).

This is an uncharacterized protein from Amazona oratrix (yellow-headed parrot).